Consider the following 77-residue polypeptide: Small integral membrane protein 5 (77 aa).

Residues 32–52 (IVAFSVIILFTATVLLLLLIA) traverse the membrane as a helical segment.

The protein resides in the membrane. The polypeptide is Small integral membrane protein 5 (SMIM5) (Homo sapiens (Human)).